A 326-amino-acid polypeptide reads, in one-letter code: Adenosine receptor A1 (326 aa).

The Extracellular segment spans residues 1-10; sequence MPHSVSAFQA. Residues 11 to 33 traverse the membrane as a helical segment; that stretch reads AYIGIEVLIALVSVPGNVLVIWA. Residues 34–46 are Cytoplasmic-facing; that stretch reads VKVNQALRDATFC. A helical membrane pass occupies residues 47–69; sequence FIASLAVADVAVGALVIPLAILI. At 70–80 the chain is on the extracellular side; sequence NIGPQTYFHTC. Residues cysteine 80 and cysteine 169 are joined by a disulfide bond. The chain crosses the membrane as a helical span at residues 81 to 102; sequence LMVACPVLILTQSSILALLAIA. Residues 103–123 are Cytoplasmic-facing; that stretch reads VDRYLRVKIPLRYKTVVTPRR. A helical membrane pass occupies residues 124–146; that stretch reads AAVAIAGCWILSLVVGLTPMFGW. Topologically, residues 147-176 are extracellular; it reads NNLSKIEMAWAANGSVGEPVIKCEFEKVIS. Asparagine 159 carries an N-linked (GlcNAc...) asparagine glycan. A helical membrane pass occupies residues 177–201; it reads MEYMVYFNFFVWVLPPLLLMVLIYL. Over 202–235 the chain is Cytoplasmic; sequence EVFYLIRKQLSKKVSASSGDPQKYYGKELKIAKS. The helical transmembrane segment at 236 to 259 threads the bilayer; it reads LALILFLFALSWLPLHILNCITLF. Topologically, residues 260–267 are extracellular; sequence CPTCHKPT. The helical transmembrane segment at 268 to 292 threads the bilayer; it reads ILTYIAIFLTHGNSAMNPIVYAFRI. Over 293 to 326 the chain is Cytoplasmic; the sequence is QKFRVTFLKIWNDHFRCQPEPPIDEDLPEEKVDD. Cysteine 309 carries S-palmitoyl cysteine lipidation.

Belongs to the G-protein coupled receptor 1 family.

Its subcellular location is the cell membrane. Receptor for adenosine. The activity of this receptor is mediated by G proteins which inhibit adenylyl cyclase. This chain is Adenosine receptor A1 (ADORA1), found in Cavia porcellus (Guinea pig).